The chain runs to 575 residues: V-type ATP synthase alpha chain (575 aa).

An ATP-binding site is contributed by 238–245 (GPFGAGKT).

The protein belongs to the ATPase alpha/beta chains family.

The enzyme catalyses ATP + H2O + 4 H(+)(in) = ADP + phosphate + 5 H(+)(out). Produces ATP from ADP in the presence of a proton gradient across the membrane. The V-type alpha chain is a catalytic subunit. This is V-type ATP synthase alpha chain from Borrelia garinii subsp. bavariensis (strain ATCC BAA-2496 / DSM 23469 / PBi) (Borreliella bavariensis).